A 658-amino-acid polypeptide reads, in one-letter code: UvrABC system protein B (658 aa).

One can recognise a Helicase ATP-binding domain in the interval 25–416 (KSLKNNNHYQ…QKNVAEQIIR (392 aa)). 38–45 (GVTGSGKT) provides a ligand contact to ATP. A Beta-hairpin motif is present at residues 91-114 (HFDYYQPESYIPRRDLFIEKDSSI). In terms of domain architecture, Helicase C-terminal spans 433–607 (QVQDLFDEIK…ELKLRDDEIK (175 aa)). The region spanning 623 to 658 (EKIIKELDKKMRERAKNLDFEEAMRLRDEIAQLRTL) is the UVR domain.

It belongs to the UvrB family. In terms of assembly, forms a heterotetramer with UvrA during the search for lesions. Interacts with UvrC in an incision complex.

Its subcellular location is the cytoplasm. In terms of biological role, the UvrABC repair system catalyzes the recognition and processing of DNA lesions. A damage recognition complex composed of 2 UvrA and 2 UvrB subunits scans DNA for abnormalities. Upon binding of the UvrA(2)B(2) complex to a putative damaged site, the DNA wraps around one UvrB monomer. DNA wrap is dependent on ATP binding by UvrB and probably causes local melting of the DNA helix, facilitating insertion of UvrB beta-hairpin between the DNA strands. Then UvrB probes one DNA strand for the presence of a lesion. If a lesion is found the UvrA subunits dissociate and the UvrB-DNA preincision complex is formed. This complex is subsequently bound by UvrC and the second UvrB is released. If no lesion is found, the DNA wraps around the other UvrB subunit that will check the other stand for damage. This is UvrABC system protein B from Helicobacter pylori (strain J99 / ATCC 700824) (Campylobacter pylori J99).